The sequence spans 185 residues: Ribosome-recycling factor (185 aa).

The protein belongs to the RRF family.

It is found in the cytoplasm. Responsible for the release of ribosomes from messenger RNA at the termination of protein biosynthesis. May increase the efficiency of translation by recycling ribosomes from one round of translation to another. The polypeptide is Ribosome-recycling factor (Pectobacterium atrosepticum (strain SCRI 1043 / ATCC BAA-672) (Erwinia carotovora subsp. atroseptica)).